We begin with the raw amino-acid sequence, 239 residues long: Cysteine-rich venom protein ENH1 (239 aa).

The N-terminal stretch at 1–18 (MIVFILLSLAAVLQQFVA) is a signal peptide. In terms of domain architecture, SCP spans 37-165 (VDMHNSFRRS…PYNYFYVCQY (129 aa)). Disulfide bonds link Cys-74–Cys-152, Cys-91–Cys-166, Cys-147–Cys-163, Cys-185–Cys-192, Cys-188–Cys-197, Cys-210–Cys-228, and Cys-219–Cys-232. The region spanning 201–234 (CPITNTFTNCDSLLQQNSCEDSYIKTNCGASCFC) is the ShKT domain.

This sequence belongs to the CRISP family. As to expression, expressed by the venom gland.

Its subcellular location is the secreted. Functionally, blocks contraction of smooth muscle elicited by high potassium-induced depolarization, but does not block caffeine-stimulated contraction. May target voltage-gated calcium channels on smooth muscle. This Pseudoferania polylepis (Macleay's water snake) protein is Cysteine-rich venom protein ENH1.